Consider the following 358-residue polypeptide: B3 domain-containing transcription factor NGA3 (358 aa).

A compositionally biased stretch (polar residues) spans 1 to 14 (MDLSLAPTTTTSSD). The tract at residues 1–45 (MDLSLAPTTTTSSDQEQDRDQELTSNIGASSSSGPSGNNNNLPMM) is disordered. Over residues 25 to 45 (SNIGASSSSGPSGNNNNLPMM) the composition is skewed to low complexity. The TF-B3 DNA-binding region spans 56 to 162 (FDKVVTPSDV…KLYIDWRHRP (107 aa)). The tract at residues 310–358 (EIGASSSSSSALRLNLSTDHDDDNDDGDDGDDDQFAKKGKSSLSLNFNP) is disordered. Acidic residues predominate over residues 329–342 (HDDDNDDGDDGDDD).

It localises to the nucleus. Functionally, regulates lateral organ growth. Functionally redundant with NGA1, NGA2 and NGA4. The protein is B3 domain-containing transcription factor NGA3 (NGA3) of Arabidopsis thaliana (Mouse-ear cress).